The sequence spans 417 residues: Zinc finger protein CONSTANS-LIKE 16 (417 aa).

4 residues coordinate Zn(2+): Cys17, Cys20, Cys40, and His45. The segment at 17-59 (CDSCVKRRARWYCAADDAFLCQSCDSLVHSANPLARRHERVRL) adopts a B box-type; atypical zinc-finger fold. Positions 63–105 (SPAVVKHSNHSSASPPHEVATWHHGFTRKARTPRGSGKKNNSS) are disordered. The stretch at 212 to 239 (LSNSEMFKIEKDEIEEEVEEIKAMSMDI) forms a coiled coil. Positions 361 to 403 (REARVSRYREKRRTRLFSKKIRYEVRKLNAEKRPRMKGRFVKR) constitute a CCT domain.

The protein belongs to the CONSTANS family.

Its subcellular location is the nucleus. This chain is Zinc finger protein CONSTANS-LIKE 16 (COL16), found in Arabidopsis thaliana (Mouse-ear cress).